Here is a 220-residue protein sequence, read N- to C-terminus: 6-phosphogluconolactonase (220 aa).

The protein belongs to the glucosamine/galactosamine-6-phosphate isomerase family. 6-phosphogluconolactonase subfamily.

The enzyme catalyses 6-phospho-D-glucono-1,5-lactone + H2O = 6-phospho-D-gluconate + H(+). It participates in carbohydrate degradation; pentose phosphate pathway; D-ribulose 5-phosphate from D-glucose 6-phosphate (oxidative stage): step 2/3. Hydrolysis of 6-phosphogluconolactone to 6-phosphogluconate. In Thermotoga maritima (strain ATCC 43589 / DSM 3109 / JCM 10099 / NBRC 100826 / MSB8), this protein is 6-phosphogluconolactonase (pgl).